We begin with the raw amino-acid sequence, 354 residues long: Tsukushi (354 aa).

An N-terminal signal peptide occupies residues 1–17 (MLCSLFLLLLAVGRVQT). In terms of domain architecture, LRRNT spans 18–59 (TRPCFPGCQCEEETFGLFDSFSLIRVDCSSLGPHIVPVPIPL). 10 LRR repeats span residues 60–81 (DTAH…VLAG), 86–107 (TLAG…AFSR), 110–131 (YLES…IFTS), 133–154 (PLSD…AFTT), 160–180 (ALHV…PARA), 186–207 (TIQS…RDLP), 208–228 (LRYL…AFMG), 231–253 (GLTH…GFRE), 256–277 (GLQV…EVFS), and 281–302 (LLQE…LLHH). Asn75 carries an N-linked (GlcNAc...) asparagine glycan. An N-linked (GlcNAc...) asparagine glycan is attached at Asn138. N-linked (GlcNAc...) asparagine glycosylation is present at Asn191.

In terms of assembly, interacts with FZD4 (via FZ domain); competes with WNT2B for binding to FZD4, inhibiting Wnt signaling and repressing peripheral eye development. Interacts with TGFB1; the interaction contributes to regulation of the hair cycle. Interacts with netrin. Interacts with CCN2. As to expression, expressed in macrophages in inflamed wounds with wound expression starting 2 days post-wounding (dpw) (at protein level). At 7 dpw, expressed from epidermis and extracellular matrix in the wound edge to neoepidermis and granulation tissue and in panniculus carnosus under the granulation tissue (at protein level). After fibrosis, disappears in the dermal area at 11 dpw (at protein level). Expressed in the hair follicle during morphogenesis and the hair cycle (at protein level). In embryonic brain, strong expression in the olfactory bulb, anterior olfactory nucleus, neocortex, piriform cortex, glial wedge, midline zipper glia, indusium griseum and the area surrounding the anterior commissure (AC) but not on AC axons (at protein level). In the adult eye, expressed in retinal layers, lens epithelium, and ciliary body where it is expressed predominantly in the inner non-pigmented layer. Expressed in almost all brain regions in the embryo, in the cortex and the lateral ventricle at P0 and is restricted to the subventricular zone and lateral nucleus of the amygdala in adults. Prominent expression in hippocampal regions from early postnatal stages until postnatal day 15 and gradually declines at later stages. Expressed in almost all bone regions in the femurs of juveniles. In the inner ear, accumulates in nonprosensory regions during early embryonic stages and in both nonprosensory and prosensory regions in late embryonic stages. In the adult ear, expressed in the organ of Corti, spiral ganglion cells, and the stria vascularis. Highly expressed in the liver where it is detected primarily in hepatocytes but not in non-parenchymal cells.

It localises to the secreted. Its function is as follows. Contributes to various developmental events and other processes such as wound healing and cholesterol homeostasis through its interactions with multiple signaling pathways. Wnt signaling inhibitor which competes with WNT2B for binding to Wnt receptor FZD4 and represses WNT2B-dependent development of the peripheral eye. Plays a role in regulating the hair cycle by controlling TGFB1 signaling. Required for the development of the anterior commissure in the brain by inhibiting neurite outgrowth. Essential for terminal differentiation of hippocampal neural stem cells. Plays a role in regulating bone elongation and bone mass by modulating growth plate chondrocyte function and overall body size. Required for development of the inner ear through its involvement in stereocilia formation in inner hair cells. Facilitates wound healing by inhibiting secretion of TGFB1 from macrophages which prevents myofibroblast differentiation, maintaining inflammatory cell quiescence. Plays a role in cholesterol homeostasis by reducing circulating high-density lipoprotein cholesterol, lowering cholesterol efflux capacity and decreasing cholesterol-to-bile acid conversion in the liver. In one study, shown to negatively regulate sympathetic innervation in brown fat, leading to reduced energy expenditure. In another study, shown not to affect brown fat thermogenic capacity, body weight gain or glucose homeostasis. The sequence is that of Tsukushi from Mus musculus (Mouse).